Reading from the N-terminus, the 351-residue chain is METGGGQGLPVLLLLLLLLRPCEVSGREAACPRPCGGRCPAEPPRCAPGVPAVLDGCGCCLVCARQRGESCSPLLPCDESGGLYCDRGPEDGGGAGICMVLEGDNCVFDGMIYRNGETFQPSCKYQCTCRDGQIGCLPRCNLGLLLPGPDCPFPRKIEVPGECCEKWVCDPRDEVLLGGFAMAAYRQEATLGIDVSDSSANCIEQTTEWSACSKSCGMGFSTRVTNRNQQCEMVKQTRLCMMRPCENEEPSDKKGKKCIQTKKSMKAVRFEYKNCTSVQTYKPRYCGLCNDGRCCTPHNTKTIQVEFRCPQGKFLKKPMMLINTCVCHGNCPQSNNAFFQPLDPMSSEAKI.

An N-terminal signal peptide occupies residues 1 to 24; that stretch reads METGGGQGLPVLLLLLLLLRPCEV. One can recognise an IGFBP N-terminal domain in the interval 27 to 101; the sequence is REAACPRPCG…GGGAGICMVL (75 aa). Disulfide bonds link C31–C57, C35–C59, C39–C60, C46–C63, C71–C85, and C77–C98. Residues 104-170 form the VWFC domain; sequence DNCVFDGMIY…GECCEKWVCD (67 aa). The 46-residue stretch at 201–246 folds into the TSP type-1 domain; sequence NCIEQTTEWSACSKSCGMGFSTRVTNRNQQCEMVKQTRLCMMRPCE. 5 disulfide bridges follow: C258–C295, C275–C309, C286–C325, C289–C327, and C294–C331. The region spanning 258 to 332 is the CTCK domain; the sequence is CIQTKKSMKA…NTCVCHGNCP (75 aa). Residue N274 is glycosylated (N-linked (GlcNAc...) asparagine).

Belongs to the CCN family. As to expression, brain and heart, and at a lower level in muscle and intestine, in the embryo. Lung and less so in brain and spleen, in adult chicken.

It is found in the secreted. It localises to the cytoplasm. Its subcellular location is the cell junction. The protein localises to the gap junction. Its function is as follows. Immediate-early protein likely to play a role in cell growth regulation. Its overexpression is associated with tumorigenesis and expression of a N-terminal-truncated version of CCN3 gene in chicken embryonic fibroblasts (CEF) is sufficient to induce the transformation of CEF in vitro. In Gallus gallus (Chicken), this protein is CCN family member 3 (CCN3).